A 287-amino-acid polypeptide reads, in one-letter code: ATP synthase gamma chain (287 aa).

It belongs to the ATPase gamma chain family. F-type ATPases have 2 components, CF(1) - the catalytic core - and CF(0) - the membrane proton channel. CF(1) has five subunits: alpha(3), beta(3), gamma(1), delta(1), epsilon(1). CF(0) has three main subunits: a, b and c.

It is found in the cell inner membrane. Its function is as follows. Produces ATP from ADP in the presence of a proton gradient across the membrane. The gamma chain is believed to be important in regulating ATPase activity and the flow of protons through the CF(0) complex. This is ATP synthase gamma chain from Colwellia maris.